Reading from the N-terminus, the 270-residue chain is Dehydrodolichyl diphosphate synthase (270 aa).

The protein belongs to the UPP synthase family.

Its subcellular location is the endoplasmic reticulum membrane. It participates in protein modification; protein glycosylation. Functionally, cis-prenyl transferase that adds multiple copies of isopentenyl pyrophosphate (IPP) to farnesyl pyrophosphate (FPP) to produce dehydrodolichyl diphosphate (Dedol-PP). In Encephalitozoon cuniculi (strain GB-M1) (Microsporidian parasite), this protein is Dehydrodolichyl diphosphate synthase (RER2).